We begin with the raw amino-acid sequence, 659 residues long: Pheromone-processing carboxypeptidase kex1 (659 aa).

The signal sequence occupies residues 1-38; sequence MAATTTTTNAGRSMASWKRLSTLIAAFTLSWTSSFVAA. Topologically, residues 39–527 are lumenal; sequence AGSADYFVHD…EMAKWEAYRK (489 aa). Ser-190 is a catalytic residue. N-linked (GlcNAc...) asparagine glycosylation is found at Asn-218 and Asn-348. The active site involves Asp-393. N-linked (GlcNAc...) asparagine glycosylation is found at Asn-444 and Asn-452. His-455 is a catalytic residue. The tract at residues 480–507 is disordered; it reads IGGQPTDSRLDGEKLPETTVGGAAGNST. Residue Asn-505 is glycosylated (N-linked (GlcNAc...) asparagine). A helical transmembrane segment spans residues 528 to 548; it reads SGELVLVIVIVAAGVWGWFVW. Topologically, residues 549 to 659 are cytoplasmic; that stretch reads KERRKTAGQG…SSSRQPGGRS (111 aa). The tract at residues 565–659 is disordered; that stretch reads GERHSISNNP…SSSRQPGGRS (95 aa). Residues 616-630 are compositionally biased toward basic and acidic residues; the sequence is DDLHLSKPEDPHADS. Over residues 649 to 659 the composition is skewed to polar residues; that stretch reads GSSSRQPGGRS.

Belongs to the peptidase S10 family.

The protein resides in the golgi apparatus. The protein localises to the trans-Golgi network membrane. The catalysed reaction is Preferential release of a C-terminal arginine or lysine residue.. Protease with a carboxypeptidase B-like function involved in the C-terminal processing of the lysine and arginine residues from protein precursors. Promotes cell fusion and is involved in the programmed cell death. In Neurospora crassa (strain ATCC 24698 / 74-OR23-1A / CBS 708.71 / DSM 1257 / FGSC 987), this protein is Pheromone-processing carboxypeptidase kex1 (kex1).